A 924-amino-acid chain; its full sequence is Isoleucine--tRNA ligase (924 aa).

The 'HIGH' region motif lies at 57–67 (PYANGDIHMGH). An L-isoleucyl-5'-AMP-binding site is contributed by glutamate 552. Residues 593-597 (KMSKS) carry the 'KMSKS' region motif. An ATP-binding site is contributed by lysine 596. Zn(2+) is bound by residues cysteine 891, cysteine 894, cysteine 911, and cysteine 914.

This sequence belongs to the class-I aminoacyl-tRNA synthetase family. IleS type 1 subfamily. As to quaternary structure, monomer. The cofactor is Zn(2+).

Its subcellular location is the cytoplasm. It catalyses the reaction tRNA(Ile) + L-isoleucine + ATP = L-isoleucyl-tRNA(Ile) + AMP + diphosphate. In terms of biological role, catalyzes the attachment of isoleucine to tRNA(Ile). As IleRS can inadvertently accommodate and process structurally similar amino acids such as valine, to avoid such errors it has two additional distinct tRNA(Ile)-dependent editing activities. One activity is designated as 'pretransfer' editing and involves the hydrolysis of activated Val-AMP. The other activity is designated 'posttransfer' editing and involves deacylation of mischarged Val-tRNA(Ile). The sequence is that of Isoleucine--tRNA ligase from Geobacillus thermodenitrificans (strain NG80-2).